Reading from the N-terminus, the 20-residue chain is Large ribosomal subunit protein uL10 (20 aa).

This sequence belongs to the universal ribosomal protein uL10 family. As to quaternary structure, part of the ribosomal stalk of the 50S ribosomal subunit. The N-terminus interacts with L11 and the large rRNA to form the base of the stalk. The C-terminus forms an elongated spine to which L12 dimers bind in a sequential fashion forming a multimeric L10(L12)X complex.

Forms part of the ribosomal stalk, playing a central role in the interaction of the ribosome with GTP-bound translation factors. The protein is Large ribosomal subunit protein uL10 (rplJ) of Citrobacter freundii.